A 73-amino-acid chain; its full sequence is Neutrophil elastase 2B (73 aa).

Positions isoleucine 1–leucine 73 constitute a Peptidase S1 domain. Residue serine 64 is the Charge relay system of the active site.

It belongs to the peptidase S1 family. Elastase subfamily.

Functionally, may be involved in the degradation of connective tissue in chronic lung disease. The sequence is that of Neutrophil elastase 2B from Equus caballus (Horse).